The sequence spans 194 residues: Transposon Tn2501 resolvase (194 aa).

The region spanning 3–143 is the Resolvase/invertase-type recombinase catalytic domain; sequence RVFAYCRVST…SGIARAKATG (141 aa). Catalysis depends on Ser11, which acts as the O-(5'-phospho-DNA)-serine intermediate. The segment at residues 170–189 is a DNA-binding region (H-T-H motif); it reads ISAIAREFNTTRQTILRVKA.

This sequence belongs to the site-specific recombinase resolvase family.

Functionally, resolvase catalyzes the resolution (a site-specific recombination) of the cointegrated replicon to yield the final transposition products. The chain is Transposon Tn2501 resolvase (tnpR) from Escherichia coli.